Here is a 326-residue protein sequence, read N- to C-terminus: MYGIEYTTFLIYLISIILFNYILKSITRMMDYIIYKFLLIVTIASIVVNAQNYGINLPITGSMDASYVNATKDKPFLTSTLCLYYPTEARTEINDNEWTSTLSQLFLTKGWPTGSVYFKEYDDIATFSVDPQLYCDYNIVLMRYNSSLELDMSELANLILNEWLCNPMDITLYYYQQTDEANKWIAMGQSCTIKVCPLNTQTLGIGCQTTNARTFEEVATAEKLVITDVVDGVNHKLDVTTATCTIRNCKKLGPRENVAVIQVGGADILNITSDPTTAPQTERMMRINWKKWWQVFYTIVDYVNQIVQAMSKMSGSLNSAAFYYRV.

The N-terminal stretch at 1–50 (MYGIEYTTFLIYLISIILFNYILKSITRMMDYIIYKFLLIVTIASIVVNA) is a signal peptide. N-linked (GlcNAc...) asparagine; by host glycosylation is present at N69. C82 and C135 form a disulfide bridge. Residue D95 coordinates Ca(2+). The N-linked (GlcNAc...) asparagine; by host glycan is linked to N145. Residues 165-167 (CNP) form a CNP motif; interaction with ITGAV/ITGB3 region. 3 disulfides stabilise this stretch: C165/C249, C191/C244, and C196/C207. Ca(2+)-binding residues include Q177, G206, T214, E216, D228, V229, and D231. The LVD motif; interaction with ITGA4/ITGB1 heterodimer stretch occupies residues 237–239 (LDV). The tract at residues 253–255 (GPR) is GPR motif; interaction with ITGAX/ITGB2. A glycan (N-linked (GlcNAc...) asparagine; by host) is linked at N270. Ca(2+) is bound at residue D301.

It belongs to the rotavirus VP7 family. As to quaternary structure, homotrimer; disulfide-linked. 2 Ca(2+) ions bound at each subunit interface in the trimer hold the trimer together. Interacts with the intermediate capsid protein VP6. Interacts with the outer capsid protein VP5*. In terms of processing, N-glycosylated. Post-translationally, the N-terminus is blocked possibly by pyroglutamic acid.

The protein localises to the virion. Its subcellular location is the host endoplasmic reticulum lumen. Functionally, calcium-binding protein that interacts with rotavirus cell receptors once the initial attachment by VP4 has been achieved. Rotavirus attachment and entry into the host cell probably involves multiple sequential contacts between the outer capsid proteins VP4 and VP7, and the cell receptors. Following entry into the host cell, low intracellular or intravesicular Ca(2+) concentration probably causes the calcium-stabilized VP7 trimers to dissociate from the virion. This step is probably necessary for the membrane-disrupting entry step and the release of VP4, which is locked onto the virion by VP7. The chain is Outer capsid glycoprotein VP7 from Bos taurus (Bovine).